The sequence spans 523 residues: 2-isopropylmalate synthase (523 aa).

Residues valine 5 to histidine 267 form the Pyruvate carboxyltransferase domain. 4 residues coordinate Mn(2+): aspartate 14, histidine 202, histidine 204, and asparagine 238. Positions lysine 392–valine 523 are regulatory domain.

Belongs to the alpha-IPM synthase/homocitrate synthase family. LeuA type 1 subfamily. In terms of assembly, homodimer. Mn(2+) serves as cofactor.

The protein localises to the cytoplasm. The enzyme catalyses 3-methyl-2-oxobutanoate + acetyl-CoA + H2O = (2S)-2-isopropylmalate + CoA + H(+). It functions in the pathway amino-acid biosynthesis; L-leucine biosynthesis; L-leucine from 3-methyl-2-oxobutanoate: step 1/4. Catalyzes the condensation of the acetyl group of acetyl-CoA with 3-methyl-2-oxobutanoate (2-ketoisovalerate) to form 3-carboxy-3-hydroxy-4-methylpentanoate (2-isopropylmalate). This is 2-isopropylmalate synthase from Shewanella pealeana (strain ATCC 700345 / ANG-SQ1).